The following is a 137-amino-acid chain: Bacteriohemerythrin (137 aa).

Fe cation-binding residues include histidine 21, histidine 53, glutamate 57, histidine 72, histidine 76, histidine 112, and aspartate 117.

It belongs to the hemerythrin family. Monomer.

In terms of biological role, oxygen-binding protein. May be involved in a storage mechanism or for delivery to oxygen-requiring enzymes. The oxygen-binding site contains two iron atoms. This is Bacteriohemerythrin from Ralstonia nicotianae (strain ATCC BAA-1114 / GMI1000) (Ralstonia solanacearum).